A 113-amino-acid chain; its full sequence is MGSPCALGLFCCCSSCFCLCCPRHRPASRLAAVVGGAAAVPAVVSGVTGLILSPSPSPIFIQPTPSPPMSFHNPGLELALDSRPAPLXPLGVTSPSAPPLPPVVDLPQLGLRR.

2 hydrophobic regions span residues 1 to 21 (MGSPCALGLFCCCSSCFCLCC) and 32 to 52 (AVVGGAAAVPAVVSGVTGLIL). Residues 27-67 (ASRLAAVVGGAAAVPAVVSGVTGLILSPSPSPIFIQPTPSP) are interaction with host HPX. The interval 47 to 71 (VTGLILSPSPSPIFIQPTPSPPMSF) is interaction with the capsid protein. Serine 70 carries the post-translational modification Phosphoserine; by host. The segment at 71–113 (FHNPGLELALDSRPAPLXPLGVTSPSAPPLPPVVDLPQLGLRR) is homodimerization, and interaction with host AMBP/bikunin. Residues 90–113 (LGVTSPSAPPLPPVVDLPQLGLRR) are disordered. The interaction with host SRC, HCK, FYN, PIK3R3 and GRB2 stretch occupies residues 94-103 (SPSAPPLPPV). The PTAP/PSAP motif signature appears at 95 to 98 (PSAP).

Belongs to the hepevirus ORF3 protein family. As to quaternary structure, forms homooligomers. Interacts with host SRC, HCK, FYN, PIK3R3 and GRB2 (via SH3 domain); binding does not activate the kinases. Interacts with host AMBP/bikunin and AMBP/alpha-1-microglobulin peptides. Interacts with host HPX/hemopexin. Interacts (when phosphorylated) with capsid protein ORF2. Interacts with host TSG101; this interaction plays a role in viral release from the host cell. Interacts with host SIRPA; this interaction down-regulates the phosphorylation of host IRF3. Post-translationally, palmitoylated in the N-terminus.

The protein resides in the host endoplasmic reticulum membrane. The protein localises to the host cytoplasm. It is found in the host cytoskeleton. Its subcellular location is the virion. It localises to the host cell membrane. Functionally, small multifunctional phosphoprotein involved in virion morphogenesis, egress and counteracting host innate immunity. Plays critical roles in the final steps of viral release by interacting with host TSG101, a member of the vacuolar protein-sorting pathway and using other cellular host proteins involved in vesicle formation pathway. Also acts as a viroporin and forms ion conductive pores allowing viral particle release. Impairs the generation of type I interferon by down-regulating host TLR3 and TLR7 as well as their downstream signaling pathways. Down-regulates the phosphorylation of host IRF3 via the interaction with host SIRP-alpha, thereby inhibiting IFN-I expression. Interacts with host microtubules. This is Protein ORF3 from Hepatitis E virus genotype 3 (isolate Human/United States/US2) (HEV-3).